The primary structure comprises 240 residues: Biosynthetic peptidoglycan transglycosylase (240 aa).

A helical membrane pass occupies residues 15–35; it reads WMFYLGAVVAIAWLATQAFYF.

This sequence belongs to the glycosyltransferase 51 family.

It is found in the cell inner membrane. The enzyme catalyses [GlcNAc-(1-&gt;4)-Mur2Ac(oyl-L-Ala-gamma-D-Glu-L-Lys-D-Ala-D-Ala)](n)-di-trans,octa-cis-undecaprenyl diphosphate + beta-D-GlcNAc-(1-&gt;4)-Mur2Ac(oyl-L-Ala-gamma-D-Glu-L-Lys-D-Ala-D-Ala)-di-trans,octa-cis-undecaprenyl diphosphate = [GlcNAc-(1-&gt;4)-Mur2Ac(oyl-L-Ala-gamma-D-Glu-L-Lys-D-Ala-D-Ala)](n+1)-di-trans,octa-cis-undecaprenyl diphosphate + di-trans,octa-cis-undecaprenyl diphosphate + H(+). It participates in cell wall biogenesis; peptidoglycan biosynthesis. In terms of biological role, peptidoglycan polymerase that catalyzes glycan chain elongation from lipid-linked precursors. This Paraburkholderia xenovorans (strain LB400) protein is Biosynthetic peptidoglycan transglycosylase.